A 294-amino-acid chain; its full sequence is MNDALKTYLTGIGWFLLSLVSSSANDVISKYLGTRLHSFEVAFFRFFFSSIVLLPFVVYYGKNTLKTSRPFVHILRGLLLFFGMTSWTYGLTIAPVTTATVVSFSIPLFTLILAVFFLNENIIWPRWVVTVVGFIGLVVTLKPHAEDFNPEILYFVLAAISFAMLDIINKKFVIKESMISMLFYSAIVTAIVSLPVASQYWLTPSSFELALLFVLGSSGSLILFFLLKAFSMVDATATAPYRYLELVISVIAAYFIFNEFPDKSTLHGAVIIIPTTLFIIYSEKKAMNRKHESQ.

10 consecutive transmembrane segments (helical) span residues 8–28 (YLTG…NDVI), 41–61 (VAFF…VYYG), 74–91 (ILRG…TYGL), 98–118 (TATV…VFFL), 121–141 (NIIW…VVTL), 148–168 (FNPE…LDII), 177–197 (SMIS…LPVA), 207–227 (FELA…FFLL), 237–257 (ATAP…YFIF), and 260–280 (FPDK…LFII). EamA domains follow at residues 21 to 141 (SSSA…VVTL) and 160 to 280 (ISFA…LFII).

The protein belongs to the drug/metabolite transporter (DMT) superfamily. 10 TMS drug/metabolite exporter (DME) (TC 2.A.7.3) family.

It localises to the cell inner membrane. Transports S-adenosylmethionine. This Rickettsia conorii (strain ATCC VR-613 / Malish 7) protein is S-adenosylmethionine uptake transporter (sam).